We begin with the raw amino-acid sequence, 645 residues long: Sister chromatid cohesion protein 1 (645 aa).

Disordered stretches follow at residues 292-311 (FEPENVEPSRPQSPESFALE), 495-527 (QSGFAGENKENEDAEDWSDPFGSSNSSRRGQLE), and 619-645 (CPLSSPKPMGLGNTMENSTMRTPMRPV).

The protein belongs to the rad21 family. As to quaternary structure, component of the cohesin complex, composed of the smc-1 and smc-3 heterodimer attached via their hinge domain, scc-1 which links them, and scc-3. Interacts with smc-1, smc-3, scc-3 and tim-1.

Its subcellular location is the nucleus. The protein localises to the chromosome. It is found in the cytoplasm. In terms of biological role, cleavable component of the cohesin complex involved in chromosome cohesion during cell cycle. The cohesin complex is required for the cohesion of sister chromatids after DNA replication. The cohesin complex apparently forms a large proteinaceous ring within which sister chromatids can be trapped. At metaphase-anaphase transition, this protein is cleaved and dissociates from chromatin, allowing sister chromatids to segregate. The chain is Sister chromatid cohesion protein 1 from Caenorhabditis elegans.